A 515-amino-acid chain; its full sequence is ATP synthase subunit alpha (515 aa).

171-178 (GDRQTGKT) is a binding site for ATP.

It belongs to the ATPase alpha/beta chains family. F-type ATPases have 2 components, CF(1) - the catalytic core - and CF(0) - the membrane proton channel. CF(1) has five subunits: alpha(3), beta(3), gamma(1), delta(1), epsilon(1). CF(0) has three main subunits: a(1), b(2) and c(9-12). The alpha and beta chains form an alternating ring which encloses part of the gamma chain. CF(1) is attached to CF(0) by a central stalk formed by the gamma and epsilon chains, while a peripheral stalk is formed by the delta and b chains.

The protein resides in the cell membrane. It carries out the reaction ATP + H2O + 4 H(+)(in) = ADP + phosphate + 5 H(+)(out). Produces ATP from ADP in the presence of a proton gradient across the membrane. The alpha chain is a regulatory subunit. This chain is ATP synthase subunit alpha, found in Stenotrophomonas maltophilia (strain K279a).